The following is a 94-amino-acid chain: Integration host factor subunit beta (94 aa).

This sequence belongs to the bacterial histone-like protein family. As to quaternary structure, heterodimer of an alpha and a beta chain.

Its function is as follows. This protein is one of the two subunits of integration host factor, a specific DNA-binding protein that functions in genetic recombination as well as in transcriptional and translational control. This is Integration host factor subunit beta from Edwardsiella ictaluri (strain 93-146).